The following is a 289-amino-acid chain: MGASLNEIKTKIASTKKTSQITGAMQMVSAAKLQKAESHAKAFQTYAEKVRKITTDLVSSDNEPAKNPMMIKREVKKTGYLVITSDRGLVGSYNSNILKSVISNIRKRHTNESEYTILALGGTGADFFKARNVKVSYVLRGLSDQPTFEEVRAIVTEAVEEYQAEEFDELYVCYNHHVNSLVSEARMEKMLPISFDEKGDEKASLVTFELEPDRETILNQLLPQYAESMIYGSIVDAKTAEHAAGMTAMRTATDNAHSVINDLTIQYNRARQASITQEITEIVAGASAL.

Belongs to the ATPase gamma chain family. F-type ATPases have 2 components, CF(1) - the catalytic core - and CF(0) - the membrane proton channel. CF(1) has five subunits: alpha(3), beta(3), gamma(1), delta(1), epsilon(1). CF(0) has three main subunits: a, b and c.

It is found in the cell membrane. In terms of biological role, produces ATP from ADP in the presence of a proton gradient across the membrane. The gamma chain is believed to be important in regulating ATPase activity and the flow of protons through the CF(0) complex. This Lactococcus lactis subsp. cremoris (strain MG1363) protein is ATP synthase gamma chain.